A 36-amino-acid polypeptide reads, in one-letter code: Pancreatic polypeptide (36 aa).

Tyrosine 36 carries the post-translational modification Tyrosine amide.

Belongs to the NPY family.

Its subcellular location is the secreted. Hormone secreted by pancreatic cells that acts as a regulator of pancreatic and gastrointestinal functions. This is Pancreatic polypeptide (PPY) from Meleagris gallopavo (Wild turkey).